A 164-amino-acid chain; its full sequence is Proline-rich protein 2 (164 aa).

Residues 1–21 (MNLKVGIAVLIIALIVPSAQP) form the signal peptide.

As to expression, component of the acid-soluble organic matrix of calcified layers of the shell (at protein level).

The protein localises to the secreted. The protein is Proline-rich protein 2 of Lottia gigantea (Giant owl limpet).